The primary structure comprises 267 residues: tRNA pseudouridine synthase A (267 aa).

Aspartate 51 functions as the Nucleophile in the catalytic mechanism. Residue tyrosine 109 coordinates substrate.

Belongs to the tRNA pseudouridine synthase TruA family. In terms of assembly, homodimer.

The enzyme catalyses uridine(38/39/40) in tRNA = pseudouridine(38/39/40) in tRNA. In terms of biological role, formation of pseudouridine at positions 38, 39 and 40 in the anticodon stem and loop of transfer RNAs. This Staphylococcus saprophyticus subsp. saprophyticus (strain ATCC 15305 / DSM 20229 / NCIMB 8711 / NCTC 7292 / S-41) protein is tRNA pseudouridine synthase A.